Here is a 97-residue protein sequence, read N- to C-terminus: Secreted LysM effector Mg1LysM (97 aa).

Positions 1-18 (MQFTALVAALLSVAAVQA) are cleaved as a signal peptide. The LysM domain maps to 37-84 (QQYVARSGDTLTKIAQEIYHDVVGVCDIARANNLADPNRIDAGTPYTI). Chitin contacts are provided by glycine 44, threonine 48, asparagine 74, and isoleucine 76.

This sequence belongs to the secreted LysM effector family. In terms of assembly, forms homodimers in a chitin-independent manner through interactions at the N-termini of Mg1LysM monomers. Homodimers are further polymerized in a chitin-dependent manner.

The protein localises to the secreted. Its subcellular location is the cell wall. In terms of biological role, secreted effector that enables the plant pathogenic fungus to manipulate host defenses for successful infection. Binds chitin but not cellulose or xylan. Chitin-induced polymerization of homodimers forms a contiguous Mg1LysM highly oligomeric super-complexe that is anchored to the chitin in the fungal cell wall to prevent hydrolysis by host chitinases. This is Secreted LysM effector Mg1LysM from Zymoseptoria tritici (strain ST99CH_3D7).